The sequence spans 147 residues: Prefoldin subunit alpha 2 (147 aa).

Belongs to the prefoldin subunit alpha family. In terms of assembly, heterohexamer of two alpha and four beta subunits.

It is found in the cytoplasm. Molecular chaperone capable of stabilizing a range of proteins. Seems to fulfill an ATP-independent, HSP70-like function in archaeal de novo protein folding. This is Prefoldin subunit alpha 2 (pfdA2) from Methanocaldococcus jannaschii (strain ATCC 43067 / DSM 2661 / JAL-1 / JCM 10045 / NBRC 100440) (Methanococcus jannaschii).